The primary structure comprises 79 residues: Acyl carrier protein 2 (79 aa).

Residues 2-77 (DDIETRVRKL…QAIDYLEEAV (76 aa)) enclose the Carrier domain. O-(pantetheine 4'-phosphoryl)serine is present on Ser37.

The protein belongs to the acyl carrier protein (ACP) family. 4'-phosphopantetheine is transferred from CoA to a specific serine of apo-ACP by AcpS. This modification is essential for activity because fatty acids are bound in thioester linkage to the sulfhydryl of the prosthetic group.

It is found in the cytoplasm. The protein operates within lipid metabolism; fatty acid biosynthesis. Functionally, carrier of the growing fatty acid chain in fatty acid biosynthesis. The sequence is that of Acyl carrier protein 2 from Pseudomonas aeruginosa (strain ATCC 15692 / DSM 22644 / CIP 104116 / JCM 14847 / LMG 12228 / 1C / PRS 101 / PAO1).